Here is an 804-residue protein sequence, read N- to C-terminus: Ion-translocating oxidoreductase complex subunit C (804 aa).

4Fe-4S ferredoxin-type domains lie at 366–397 and 407–436; these read SEMG…QQLY and KARA…VQYY. Positions 377, 380, 383, 387, 416, 419, 422, and 426 each coordinate [4Fe-4S] cluster. Disordered regions lie at residues 466-532 and 567-804; these read RLER…EVRV and KAAQ…MQED. 7 stretches are compositionally biased toward low complexity: residues 484-495, 567-582, 592-619, 629-660, 668-693, 706-731, and 744-769; these read SVASSDAGAIAA, KAAQ…APQQ, AAVA…EAPQ, KAAV…QQSA, and AAVA…ATEA.

This sequence belongs to the 4Fe4S bacterial-type ferredoxin family. RnfC subfamily. As to quaternary structure, the complex is composed of six subunits: RnfA, RnfB, RnfC, RnfD, RnfE and RnfG. The cofactor is [4Fe-4S] cluster.

The protein localises to the cell inner membrane. Part of a membrane-bound complex that couples electron transfer with translocation of ions across the membrane. This chain is Ion-translocating oxidoreductase complex subunit C, found in Erwinia tasmaniensis (strain DSM 17950 / CFBP 7177 / CIP 109463 / NCPPB 4357 / Et1/99).